We begin with the raw amino-acid sequence, 173 residues long: Protein tyrosine phosphatase type IVA 3 (173 aa).

One can recognise a Tyrosine-protein phosphatase domain in the interval 8-161; that stretch reads APVEVSYKNM…YRPKQRLRFK (154 aa). Cysteines 49 and 104 form a disulfide. Catalysis depends on Asp72, which acts as the Proton donor. The Phosphocysteine intermediate role is filled by Cys104. Position 110 (Arg110) interacts with substrate. Cys170 carries the cysteine methyl ester modification. Cys170 carries the S-farnesyl cysteine lipid modification. Residues 171–173 constitute a propeptide, removed in mature form; the sequence is CIM.

It belongs to the protein-tyrosine phosphatase family. As to quaternary structure, interacts with tubulin. Post-translationally, farnesylated. Farnesylation is required for membrane targeting. Unfarnesylated forms are shifted into the nucleus.

Its subcellular location is the cell membrane. The protein localises to the early endosome. It catalyses the reaction O-phospho-L-tyrosyl-[protein] + H2O = L-tyrosyl-[protein] + phosphate. Its activity is regulated as follows. Inhibited by sodium orthovanadate and peroxovanadium compounds, and by pentamidine. Functionally, protein tyrosine phosphatase which stimulates progression from G1 into S phase during mitosis. Enhances cell proliferation, cell motility and invasive activity, and promotes cancer metastasis. May be involved in the progression of cardiac hypertrophy by inhibiting intracellular calcium mobilization in response to angiotensin II. In Bos taurus (Bovine), this protein is Protein tyrosine phosphatase type IVA 3 (PTP4A3).